The following is a 564-amino-acid chain: Proline--tRNA ligase 1 (564 aa).

The protein belongs to the class-II aminoacyl-tRNA synthetase family. ProS type 1 subfamily. As to quaternary structure, homodimer.

It is found in the cytoplasm. It catalyses the reaction tRNA(Pro) + L-proline + ATP = L-prolyl-tRNA(Pro) + AMP + diphosphate. Catalyzes the attachment of proline to tRNA(Pro) in a two-step reaction: proline is first activated by ATP to form Pro-AMP and then transferred to the acceptor end of tRNA(Pro). As ProRS can inadvertently accommodate and process non-cognate amino acids such as alanine and cysteine, to avoid such errors it has two additional distinct editing activities against alanine. One activity is designated as 'pretransfer' editing and involves the tRNA(Pro)-independent hydrolysis of activated Ala-AMP. The other activity is designated 'posttransfer' editing and involves deacylation of mischarged Ala-tRNA(Pro). The misacylated Cys-tRNA(Pro) is not edited by ProRS. This chain is Proline--tRNA ligase 1, found in Streptomyces avermitilis (strain ATCC 31267 / DSM 46492 / JCM 5070 / NBRC 14893 / NCIMB 12804 / NRRL 8165 / MA-4680).